The sequence spans 847 residues: UPF0182 protein CYB_0372 (847 aa).

7 helical membrane-spanning segments follow: residues 7–27 (GLFL…LAAF), 51–71 (WGLG…NICS), 76–96 (ATLA…AGSL), 141–161 (FNLV…ELGL), 168–188 (LALS…LFLI), 220–240 (LPAT…FWAL), and 259–279 (WASS…FGLL).

It belongs to the UPF0182 family.

The protein localises to the cell membrane. The sequence is that of UPF0182 protein CYB_0372 from Synechococcus sp. (strain JA-2-3B'a(2-13)) (Cyanobacteria bacterium Yellowstone B-Prime).